The following is a 205-amino-acid chain: Putative 3-methyladenine DNA glycosylase (205 aa).

It belongs to the DNA glycosylase MPG family.

This chain is Putative 3-methyladenine DNA glycosylase, found in Clostridium perfringens (strain SM101 / Type A).